The primary structure comprises 498 residues: Lipase 3 (498 aa).

An intrachain disulfide couples Cys60 to Cys91. N-linked (GlcNAc...) asparagine glycosylation is present at Asn193. The active-site Acyl-ester intermediate is Ser200. Asn384 carries an N-linked (GlcNAc...) asparagine glycan. The Charge relay system role is filled by His409. The N-linked (GlcNAc...) asparagine glycan is linked to Asn418.

The protein belongs to the type-B carboxylesterase/lipase family.

The catalysed reaction is a triacylglycerol + H2O = a diacylglycerol + a fatty acid + H(+). This chain is Lipase 3 (LIP3), found in Yarrowia lipolytica (strain CLIB 122 / E 150) (Yeast).